The following is a 235-amino-acid chain: Matrix protein (235 aa).

The protein belongs to the nucleorhabdovirus type-2 matrix protein family. Homomultimer. Interacts with nucleoprotein and with the cytoplasmic domain of glycoprotein.

The protein resides in the virion membrane. It localises to the host endomembrane system. Plays a major role in assembly and budding of virion. Completely covers the ribonucleoprotein coil and keep it in condensed bullet-shaped form. Inhibits viral transcription and stimulates replication. The sequence is that of Matrix protein (M) from Rottboellia (Sorghum).